Consider the following 133-residue polypeptide: MQRVTITLDDDLLETLDNLSQRRGYNNRSEAIRDILRGALAQESTQQHGTEGFAVLSYVYEHEKRDLASRIVSTQHHHHDLSVATLHVHINHDDCLEIAVLKGDMGDVQHFADDVISQRGVRHGHLQCLPKED.

Residues histidine 76, histidine 87, histidine 89, and cysteine 95 each contribute to the Ni(2+) site.

The protein belongs to the transcriptional regulatory CopG/NikR family. As to quaternary structure, homotetramer. Requires Ni(2+) as cofactor.

Its function is as follows. Transcriptional repressor of the nikABCDE operon. Is active in the presence of excessive concentrations of intracellular nickel. The polypeptide is Nickel-responsive regulator (Escherichia fergusonii (strain ATCC 35469 / DSM 13698 / CCUG 18766 / IAM 14443 / JCM 21226 / LMG 7866 / NBRC 102419 / NCTC 12128 / CDC 0568-73)).